Reading from the N-terminus, the 559-residue chain is Formate--tetrahydrofolate ligase (559 aa).

ATP is bound at residue threonine 68–threonine 75.

This sequence belongs to the formate--tetrahydrofolate ligase family.

It carries out the reaction (6S)-5,6,7,8-tetrahydrofolate + formate + ATP = (6R)-10-formyltetrahydrofolate + ADP + phosphate. The protein operates within one-carbon metabolism; tetrahydrofolate interconversion. This chain is Formate--tetrahydrofolate ligase, found in Rhizobium etli (strain CIAT 652).